Reading from the N-terminus, the 404-residue chain is Proteasomal ubiquitin receptor ADRM1-B (404 aa).

The region spanning 17-130 (SSSKYLVEFR…RKVNEYLNNP (114 aa)) is the Pru domain. 3 disordered regions span residues 128 to 149 (NNPPMPGALGGSGSGSHELSAL), 195 to 258 (GSGG…TSPT), and 376 to 404 (FAKAMQSTSSQKERESSEKKEEEEDMSLD). The span at 195–247 (GSGGPTTSSSSSSSRSQSAAVTPSSTTSSTRTTSAPVAPAAAPATTPSPAVSS) shows a compositional bias: low complexity. A compositionally biased stretch (polar residues) spans 248-258 (NDGASAATSPT). The DEUBAD domain maps to 278 to 390 (TGEGGQQVDL…QSTSSQKERE (113 aa)). A compositionally biased stretch (basic and acidic residues) spans 386 to 395 (QKERESSEKK).

The protein belongs to the ADRM1 family. As to quaternary structure, component of the 19S proteasome regulatory particle complex. The 26S proteasome consists of a 20S core particle (CP) and two 19S regulatory subunits (RP).

It localises to the cytoplasm. The protein localises to the nucleus. Its function is as follows. Component of the 26S proteasome, a multiprotein complex involved in the ATP-dependent degradation of ubiquitinated proteins. This complex plays a key role in the maintenance of protein homeostasis by removing misfolded or damaged proteins, which could impair cellular functions, and by removing proteins whose functions are no longer required. Therefore, the proteasome participates in numerous cellular processes, including cell cycle progression, apoptosis, or DNA damage repair. Within the complex, functions as a proteasomal ubiquitin receptor. The chain is Proteasomal ubiquitin receptor ADRM1-B (adrm1-b) from Xenopus laevis (African clawed frog).